The following is an 89-amino-acid chain: Sec-independent protein translocase protein TatA (89 aa).

A helical membrane pass occupies residues 1 to 21; the sequence is MFGLSPAQLIILLVVILLIFG.

This sequence belongs to the TatA/E family. As to quaternary structure, the Tat system comprises two distinct complexes: a TatABC complex, containing multiple copies of TatA, TatB and TatC subunits, and a separate TatA complex, containing only TatA subunits. Substrates initially bind to the TatABC complex, which probably triggers association of the separate TatA complex to form the active translocon.

It localises to the cell inner membrane. In terms of biological role, part of the twin-arginine translocation (Tat) system that transports large folded proteins containing a characteristic twin-arginine motif in their signal peptide across membranes. TatA could form the protein-conducting channel of the Tat system. In Haemophilus influenzae (strain ATCC 51907 / DSM 11121 / KW20 / Rd), this protein is Sec-independent protein translocase protein TatA.